We begin with the raw amino-acid sequence, 134 residues long: Large ribosomal subunit protein bL20 (134 aa).

It belongs to the bacterial ribosomal protein bL20 family.

Functionally, binds directly to 23S ribosomal RNA and is necessary for the in vitro assembly process of the 50S ribosomal subunit. It is not involved in the protein synthesizing functions of that subunit. The protein is Large ribosomal subunit protein bL20 of Rhizobium meliloti (strain 1021) (Ensifer meliloti).